Here is a 236-residue protein sequence, read N- to C-terminus: C-&gt;U-editing enzyme APOBEC-1 (236 aa).

Positions 10-134 (KDYTLRRRIE…RRNRQGLKDL (125 aa)) constitute a CMP/dCMP-type deaminase domain. His-61 serves as a coordination point for Zn(2+). The active-site Proton donor is the Glu-63. 2 residues coordinate Zn(2+): Cys-93 and Cys-96.

It belongs to the cytidine and deoxycytidylate deaminase family. As to quaternary structure, homodimer. Interacts with A1CF; form an mRNA editing complex. Interacts with RBM47; form an mRNA editing complex. Found in a complex with CELF2/CUGBP2 and A1CF. Interacts with HNRPAB. Interacts with SYNCRIP. It depends on Zn(2+) as a cofactor. In terms of tissue distribution, expressed exclusively in the intestine.

Its subcellular location is the cytoplasm. The protein resides in the nucleus. It carries out the reaction a cytidine in mRNA + H2O + H(+) = a uridine in mRNA + NH4(+). The catalysed reaction is cytidine(6666) in apoB mRNA + H2O + H(+) = uridine(6666) in apoB mRNA + NH4(+). Functionally, cytidine deaminase catalyzing the cytidine to uridine postranscriptional editing of a variety of mRNAs. Form complexes with cofactors that confer differential editing activity and selectivity. Responsible for the postranscriptional editing of a CAA codon for Gln to a UAA codon for stop in the apolipoprotein B mRNA. Also involved in CGA (Arg) to UGA (Stop) editing in the NF1 mRNA. May also play a role in the epigenetic regulation of gene expression by participating in DNA demethylation. In Oryctolagus cuniculus (Rabbit), this protein is C-&gt;U-editing enzyme APOBEC-1.